The sequence spans 863 residues: Protein translocase subunit SecA (863 aa).

Residues glutamine 88, 106–110, and aspartate 496 each bind ATP; that span reads GEGKT. The segment at 818–842 is disordered; that stretch reads EVKTEPVITKKKPARNEPCPCGSGK. Residues cysteine 836, cysteine 838, cysteine 847, and cysteine 848 each contribute to the Zn(2+) site.

Belongs to the SecA family. In terms of assembly, monomer and homodimer. Part of the essential Sec protein translocation apparatus which comprises SecA, SecYEG and auxiliary proteins SecDF-YajC and YidC. Zn(2+) serves as cofactor.

It is found in the cell inner membrane. Its subcellular location is the cytoplasm. It catalyses the reaction ATP + H2O + cellular proteinSide 1 = ADP + phosphate + cellular proteinSide 2.. Part of the Sec protein translocase complex. Interacts with the SecYEG preprotein conducting channel. Has a central role in coupling the hydrolysis of ATP to the transfer of proteins into and across the cell membrane, serving as an ATP-driven molecular motor driving the stepwise translocation of polypeptide chains across the membrane. This is Protein translocase subunit SecA from Nitratiruptor sp. (strain SB155-2).